The primary structure comprises 125 residues: Large-conductance mechanosensitive channel (125 aa).

2 helical membrane passes run 15–35 (MDLA…NSLV) and 67–87 (GSFL…FFLI).

This sequence belongs to the MscL family. In terms of assembly, homopentamer.

The protein resides in the cell membrane. Functionally, channel that opens in response to stretch forces in the membrane lipid bilayer. May participate in the regulation of osmotic pressure changes within the cell. This Lactobacillus gasseri (strain ATCC 33323 / DSM 20243 / BCRC 14619 / CIP 102991 / JCM 1131 / KCTC 3163 / NCIMB 11718 / NCTC 13722 / AM63) protein is Large-conductance mechanosensitive channel.